The following is a 662-amino-acid chain: Mitochondrial Rho GTPase 1 (662 aa).

At Met1–Ala634 the chain is on the cytoplasmic side. Positions Lys3–His185 constitute a Miro 1 domain. GTP is bound by residues Gly12 to Ser19, Asp62 to Ser64, and Asn116 to Asp119. EF-hand domains lie at Leu201–Lys236 and Lys330–Leu365. Residues Asp214, Asn216, Asp218, Tyr220, Glu225, Asp343, Asp345, Asp347, and Glu354 each coordinate Ca(2+). Residues Arg446–Asp611 form the Miro 2 domain. Residues Gly455 to Ser462, Glu491 to Gly495, and Ser560 to Asp563 contribute to the GTP site. A helical; Anchor for type IV membrane protein membrane pass occupies residues Leu635 to Phe655. Over Lys656–Lys662 the chain is Mitochondrial intermembrane.

The protein belongs to the mitochondrial Rho GTPase family.

The protein localises to the mitochondrion outer membrane. In terms of biological role, mitochondrial GTPase involved in mitochondrial trafficking. Probably involved in control of anterograde transport of mitochondria and their subcellular distribution. The sequence is that of Mitochondrial Rho GTPase 1 (GEM1) from Saccharomyces cerevisiae (strain ATCC 204508 / S288c) (Baker's yeast).